The primary structure comprises 235 residues: Large ribosomal subunit protein uL1 (235 aa).

The protein belongs to the universal ribosomal protein uL1 family. In terms of assembly, part of the 50S ribosomal subunit.

Functionally, binds directly to 23S rRNA. The L1 stalk is quite mobile in the ribosome, and is involved in E site tRNA release. Its function is as follows. Protein L1 is also a translational repressor protein, it controls the translation of the L11 operon by binding to its mRNA. This Prochlorococcus marinus (strain MIT 9313) protein is Large ribosomal subunit protein uL1.